The sequence spans 150 residues: Large ribosomal subunit protein bL9 (150 aa).

It belongs to the bacterial ribosomal protein bL9 family.

Binds to the 23S rRNA. The sequence is that of Large ribosomal subunit protein bL9 from Corynebacterium glutamicum (strain R).